A 156-amino-acid chain; its full sequence is ATP synthase subunit b (156 aa).

Residues 1–21 (MNVTVTLIGQMVAFGILVWFV) form a helical membrane-spanning segment.

This sequence belongs to the ATPase B chain family. As to quaternary structure, F-type ATPases have 2 components, F(1) - the catalytic core - and F(0) - the membrane proton channel. F(1) has five subunits: alpha(3), beta(3), gamma(1), delta(1), epsilon(1). F(0) has three main subunits: a(1), b(2) and c(10-14). The alpha and beta chains form an alternating ring which encloses part of the gamma chain. F(1) is attached to F(0) by a central stalk formed by the gamma and epsilon chains, while a peripheral stalk is formed by the delta and b chains.

The protein resides in the cell inner membrane. F(1)F(0) ATP synthase produces ATP from ADP in the presence of a proton or sodium gradient. F-type ATPases consist of two structural domains, F(1) containing the extramembraneous catalytic core and F(0) containing the membrane proton channel, linked together by a central stalk and a peripheral stalk. During catalysis, ATP synthesis in the catalytic domain of F(1) is coupled via a rotary mechanism of the central stalk subunits to proton translocation. Functionally, component of the F(0) channel, it forms part of the peripheral stalk, linking F(1) to F(0). The protein is ATP synthase subunit b of Nitrosococcus oceani (strain ATCC 19707 / BCRC 17464 / JCM 30415 / NCIMB 11848 / C-107).